Reading from the N-terminus, the 399-residue chain is Acetate kinase (399 aa).

Residue asparagine 10 participates in Mg(2+) binding. Position 17 (lysine 17) interacts with ATP. Arginine 91 serves as a coordination point for substrate. Aspartate 148 functions as the Proton donor/acceptor in the catalytic mechanism. ATP is bound by residues 208 to 212, 283 to 285, and 331 to 335; these read HLGNG, DCR, and GIGEN. Glutamate 385 serves as a coordination point for Mg(2+).

It belongs to the acetokinase family. In terms of assembly, homodimer. The cofactor is Mg(2+). Mn(2+) is required as a cofactor.

Its subcellular location is the cytoplasm. It catalyses the reaction acetate + ATP = acetyl phosphate + ADP. The protein operates within metabolic intermediate biosynthesis; acetyl-CoA biosynthesis; acetyl-CoA from acetate: step 1/2. Catalyzes the formation of acetyl phosphate from acetate and ATP. Can also catalyze the reverse reaction. The polypeptide is Acetate kinase (Shewanella oneidensis (strain ATCC 700550 / JCM 31522 / CIP 106686 / LMG 19005 / NCIMB 14063 / MR-1)).